The sequence spans 236 residues: Purine nucleoside phosphorylase DeoD-type 2 (236 aa).

Histidine 5 is an a purine D-ribonucleoside binding site. Residues glycine 21, arginine 25, arginine 44, and 88-91 (RVGS) each bind phosphate. A purine D-ribonucleoside contacts are provided by residues 180–182 (DME) and 204–205 (SD). Aspartate 205 functions as the Proton donor in the catalytic mechanism.

The protein belongs to the PNP/UDP phosphorylase family. In terms of assembly, homohexamer; trimer of homodimers.

It catalyses the reaction a purine D-ribonucleoside + phosphate = a purine nucleobase + alpha-D-ribose 1-phosphate. The enzyme catalyses a purine 2'-deoxy-D-ribonucleoside + phosphate = a purine nucleobase + 2-deoxy-alpha-D-ribose 1-phosphate. Functionally, catalyzes the reversible phosphorolytic breakdown of the N-glycosidic bond in the beta-(deoxy)ribonucleoside molecules, with the formation of the corresponding free purine bases and pentose-1-phosphate. This is Purine nucleoside phosphorylase DeoD-type 2 from Photobacterium profundum (strain SS9).